A 434-amino-acid chain; its full sequence is Tubulin gamma chain (434 aa).

A GTP-binding site is contributed by 135–141 (AGGTGSG).

This sequence belongs to the tubulin family.

It is found in the cytoplasm. Its subcellular location is the cytoskeleton. It localises to the microtubule organizing center. The protein localises to the spindle pole body. Its function is as follows. Tubulin is the major constituent of microtubules. The gamma chain is found at microtubule organizing centers (MTOC) such as the spindle poles or the centrosome, suggesting that it is involved in the minus-end nucleation of microtubule assembly. This is Tubulin gamma chain (TUB4) from Encephalitozoon cuniculi (strain GB-M1) (Microsporidian parasite).